A 453-amino-acid polypeptide reads, in one-letter code: tRNA modification GTPase MnmE (453 aa).

3 residues coordinate (6S)-5-formyl-5,6,7,8-tetrahydrofolate: R22, E79, and K119. The 162-residue stretch at 215-376 (GMKVVIAGRP…LKQHLKSLMG (162 aa)) folds into the TrmE-type G domain. K(+) is bound at residue N225. GTP is bound by residues 225–230 (NAGKSS), 244–250 (TEIAGTT), 269–272 (DTAG), and 334–337 (NKAD). A Mg(2+)-binding site is contributed by S229. K(+) contacts are provided by T244, I246, and T249. Residue T250 participates in Mg(2+) binding. K453 contacts (6S)-5-formyl-5,6,7,8-tetrahydrofolate.

This sequence belongs to the TRAFAC class TrmE-Era-EngA-EngB-Septin-like GTPase superfamily. TrmE GTPase family. Homodimer. Heterotetramer of two MnmE and two MnmG subunits. Requires K(+) as cofactor.

It localises to the cytoplasm. Its function is as follows. Exhibits a very high intrinsic GTPase hydrolysis rate. Involved in the addition of a carboxymethylaminomethyl (cmnm) group at the wobble position (U34) of certain tRNAs, forming tRNA-cmnm(5)s(2)U34. This chain is tRNA modification GTPase MnmE, found in Shewanella baltica (strain OS155 / ATCC BAA-1091).